Consider the following 272-residue polypeptide: Putative phosphoenolpyruvate synthase regulatory protein (272 aa).

An ADP-binding site is contributed by 152-159 (GVSRCGKT).

Belongs to the pyruvate, phosphate/water dikinase regulatory protein family. PSRP subfamily.

It carries out the reaction [pyruvate, water dikinase] + ADP = [pyruvate, water dikinase]-phosphate + AMP + H(+). It catalyses the reaction [pyruvate, water dikinase]-phosphate + phosphate + H(+) = [pyruvate, water dikinase] + diphosphate. Functionally, bifunctional serine/threonine kinase and phosphorylase involved in the regulation of the phosphoenolpyruvate synthase (PEPS) by catalyzing its phosphorylation/dephosphorylation. In Ectopseudomonas mendocina (strain ymp) (Pseudomonas mendocina), this protein is Putative phosphoenolpyruvate synthase regulatory protein.